A 380-amino-acid polypeptide reads, in one-letter code: Variant-surface-glycoprotein phospholipase C (380 aa).

The 175-residue stretch at 31–205 (ITQVCFVGSH…SRRRIFLVVG (175 aa)) folds into the PI-PLC X-box domain.

Monomer.

Its subcellular location is the membrane. The enzyme catalyses a 6-(alpha-D-glucosaminyl)-1-(1,2-diacyl-sn-glycero-3-phospho)-1D-myo-inositol = 6-(alpha-D-glucosaminyl)-1D-myo-inositol 1,2-cyclic phosphate + a 1,2-diacyl-sn-glycerol. Its function is as follows. By hydrolysis of the attached glycolipid, releases soluble variant surface glycoprotein containing phosphoinositol from the cell wall of T.brucei after cell lysis. It also cleaves similar membrane anchors on some mammalian proteins. VSG lipase may play a role in processes such as parasite differentiation or antigenic variation. This chain is Variant-surface-glycoprotein phospholipase C, found in Trypanosoma cruzi.